We begin with the raw amino-acid sequence, 497 residues long: Glycerol kinase (497 aa).

Position 11 (Thr-11) interacts with ADP. ATP-binding residues include Thr-11, Ser-12, and Ser-13. Sn-glycerol 3-phosphate is bound at residue Thr-11. Arg-15 is a binding site for ADP. Sn-glycerol 3-phosphate contacts are provided by Arg-81, Glu-82, Tyr-133, and Asp-242. 5 residues coordinate glycerol: Arg-81, Glu-82, Tyr-133, Asp-242, and Gln-243. ADP is bound by residues Thr-264 and Gly-307. Thr-264, Gly-307, Gln-311, and Gly-412 together coordinate ATP. Positions 412 and 416 each coordinate ADP.

The protein belongs to the FGGY kinase family.

It catalyses the reaction glycerol + ATP = sn-glycerol 3-phosphate + ADP + H(+). Its pathway is polyol metabolism; glycerol degradation via glycerol kinase pathway; sn-glycerol 3-phosphate from glycerol: step 1/1. With respect to regulation, inhibited by fructose 1,6-bisphosphate (FBP). In terms of biological role, key enzyme in the regulation of glycerol uptake and metabolism. Catalyzes the phosphorylation of glycerol to yield sn-glycerol 3-phosphate. The sequence is that of Glycerol kinase from Variovorax paradoxus (strain S110).